The primary structure comprises 328 residues: Probable membrane-associated kinase regulator 4 (328 aa).

Positions Gly-213–Ser-253 are disordered. Polar residues predominate over residues Gln-223–Met-240.

It localises to the cell membrane. The sequence is that of Probable membrane-associated kinase regulator 4 (MAKR4) from Arabidopsis thaliana (Mouse-ear cress).